The sequence spans 244 residues: Ribonuclease PH (244 aa).

Phosphate contacts are provided by residues Arg86 and 124–126 (GTR).

This sequence belongs to the RNase PH family. Homohexameric ring arranged as a trimer of dimers.

The catalysed reaction is tRNA(n+1) + phosphate = tRNA(n) + a ribonucleoside 5'-diphosphate. Its function is as follows. Phosphorolytic 3'-5' exoribonuclease that plays an important role in tRNA 3'-end maturation. Removes nucleotide residues following the 3'-CCA terminus of tRNAs; can also add nucleotides to the ends of RNA molecules by using nucleoside diphosphates as substrates, but this may not be physiologically important. Probably plays a role in initiation of 16S rRNA degradation (leading to ribosome degradation) during starvation. The chain is Ribonuclease PH from Glaesserella parasuis serovar 5 (strain SH0165) (Haemophilus parasuis).